The primary structure comprises 164 residues: UPF0304 protein ESA_00925 (164 aa).

The protein belongs to the UPF0304 family.

In Cronobacter sakazakii (strain ATCC BAA-894) (Enterobacter sakazakii), this protein is UPF0304 protein ESA_00925.